A 324-amino-acid chain; its full sequence is Putative GTPase PYRAB02490 (324 aa).

GTP contacts are provided by residues 52–60, Asp194, and 229–231; these read GPPGAGKST and VAT.

Belongs to the SIMIBI class G3E GTPase family. ArgK/MeaB subfamily.

In terms of biological role, may have GTPase activity. May also bind and hydrolyze ATP. May function as chaperone. The chain is Putative GTPase PYRAB02490 from Pyrococcus abyssi (strain GE5 / Orsay).